Reading from the N-terminus, the 445-residue chain is Questin oxidase (445 aa).

This sequence belongs to the questin oxidase family. NADPH serves as cofactor. Specifically expressed in conidia.

It functions in the pathway secondary metabolite biosynthesis. Its function is as follows. Questin oxidase; part of the gene cluster that mediates the biosynthesis of trypacidin, a mycotoxin with antiprotozoal activity and that plays a role in the infection process. The pathway begins with the synthesis of atrochrysone thioester by the polyketide synthase (PKS) tpcC. The atrochrysone carboxyl ACP thioesterase tpcB then breaks the thioester bond and releases the atrochrysone carboxylic acid from tpcC. The decarboxylase tpcK converts atrochrysone carboxylic acid to atrochrysone which is further reduced into emodin anthrone. The next step is performed by the emodin anthrone oxygenase tpcL that catalyzes the oxidation of emodinanthrone to emodin. Emodin O-methyltransferase encoded by tpcA catalyzes methylation of the 8-hydroxy group of emodin to form questin. Ring cleavage of questin by questin oxidase tpcI leads to desmethylsulochrin via several intermediates including questin epoxide. Another methylation step catalyzed by tpcM leads to the formation of sulochrin which is further converted to monomethylsulfochrin by tpcH. Finally, the tpcJ catalyzes the conversion of monomethylsulfochrin to trypacidin. Trypacidin is toxic for human pulmonary and bronchial epithelial cells by initiating the intracellular formation of nitric oxide (NO) and hydrogen peroxide (H(2)O(2)), thus triggering host necrotic cell death. The trypacidin pathway is also able to produce endocrocin via a distinct route from the endocrocin Enc pathway. The chain is Questin oxidase from Aspergillus fumigatus (strain ATCC MYA-4609 / CBS 101355 / FGSC A1100 / Af293) (Neosartorya fumigata).